Consider the following 339-residue polypeptide: Ketol-acid reductoisomerase (NADP(+)) (339 aa).

Residues 1–182 (MRVYYDRDAD…GGGRSGIIET (182 aa)) enclose the KARI N-terminal Rossmann domain. NADP(+)-binding positions include 24–27 (YGSQ), Lys-48, Ser-51, Thr-53, and 83–86 (DELQ). Residue His-108 is part of the active site. Position 134 (Gly-134) interacts with NADP(+). The KARI C-terminal knotted domain maps to 183–328 (NFKEECETDL…AKLRGMMPWI (146 aa)). Asp-191, Glu-195, Glu-227, and Glu-231 together coordinate Mg(2+). A substrate-binding site is contributed by Ser-252.

It belongs to the ketol-acid reductoisomerase family. Mg(2+) is required as a cofactor.

It carries out the reaction (2R)-2,3-dihydroxy-3-methylbutanoate + NADP(+) = (2S)-2-acetolactate + NADPH + H(+). The enzyme catalyses (2R,3R)-2,3-dihydroxy-3-methylpentanoate + NADP(+) = (S)-2-ethyl-2-hydroxy-3-oxobutanoate + NADPH + H(+). It functions in the pathway amino-acid biosynthesis; L-isoleucine biosynthesis; L-isoleucine from 2-oxobutanoate: step 2/4. Its pathway is amino-acid biosynthesis; L-valine biosynthesis; L-valine from pyruvate: step 2/4. Its function is as follows. Involved in the biosynthesis of branched-chain amino acids (BCAA). Catalyzes an alkyl-migration followed by a ketol-acid reduction of (S)-2-acetolactate (S2AL) to yield (R)-2,3-dihydroxy-isovalerate. In the isomerase reaction, S2AL is rearranged via a Mg-dependent methyl migration to produce 3-hydroxy-3-methyl-2-ketobutyrate (HMKB). In the reductase reaction, this 2-ketoacid undergoes a metal-dependent reduction by NADPH to yield (R)-2,3-dihydroxy-isovalerate. This is Ketol-acid reductoisomerase (NADP(+)) from Sinorhizobium fredii (strain NBRC 101917 / NGR234).